The following is a 227-amino-acid chain: Cytochrome c oxidase subunit 2 (227 aa).

Over 1 to 14 (MAYPFQLGLQDATS) the chain is Mitochondrial intermembrane. A helical transmembrane segment spans residues 15–45 (PIMEELTNFHDHTLMIVFLISSLVLYLISLM). Residues 46–59 (LTTKLIHTNTMDAQ) are Mitochondrial matrix-facing. Residues 60–87 (EVETVWTILPAIILIMIALPSLRILYLM) traverse the membrane as a helical segment. Residues 88 to 227 (DEINNPVLTV…LFENWSTSMI (140 aa)) lie on the Mitochondrial intermembrane side of the membrane. Positions 161, 196, 198, 200, 204, and 207 each coordinate Cu cation. Glutamate 198 is a Mg(2+) binding site.

This sequence belongs to the cytochrome c oxidase subunit 2 family. As to quaternary structure, component of the cytochrome c oxidase (complex IV, CIV), a multisubunit enzyme composed of 14 subunits. The complex is composed of a catalytic core of 3 subunits MT-CO1, MT-CO2 and MT-CO3, encoded in the mitochondrial DNA, and 11 supernumerary subunits COX4I, COX5A, COX5B, COX6A, COX6B, COX6C, COX7A, COX7B, COX7C, COX8 and NDUFA4, which are encoded in the nuclear genome. The complex exists as a monomer or a dimer and forms supercomplexes (SCs) in the inner mitochondrial membrane with NADH-ubiquinone oxidoreductase (complex I, CI) and ubiquinol-cytochrome c oxidoreductase (cytochrome b-c1 complex, complex III, CIII), resulting in different assemblies (supercomplex SCI(1)III(2)IV(1) and megacomplex MCI(2)III(2)IV(2)). Found in a complex with TMEM177, COA6, COX18, COX20, SCO1 and SCO2. Interacts with TMEM177 in a COX20-dependent manner. Interacts with COX20. Interacts with COX16. Cu cation serves as cofactor.

The protein localises to the mitochondrion inner membrane. It catalyses the reaction 4 Fe(II)-[cytochrome c] + O2 + 8 H(+)(in) = 4 Fe(III)-[cytochrome c] + 2 H2O + 4 H(+)(out). Functionally, component of the cytochrome c oxidase, the last enzyme in the mitochondrial electron transport chain which drives oxidative phosphorylation. The respiratory chain contains 3 multisubunit complexes succinate dehydrogenase (complex II, CII), ubiquinol-cytochrome c oxidoreductase (cytochrome b-c1 complex, complex III, CIII) and cytochrome c oxidase (complex IV, CIV), that cooperate to transfer electrons derived from NADH and succinate to molecular oxygen, creating an electrochemical gradient over the inner membrane that drives transmembrane transport and the ATP synthase. Cytochrome c oxidase is the component of the respiratory chain that catalyzes the reduction of oxygen to water. Electrons originating from reduced cytochrome c in the intermembrane space (IMS) are transferred via the dinuclear copper A center (CU(A)) of subunit 2 and heme A of subunit 1 to the active site in subunit 1, a binuclear center (BNC) formed by heme A3 and copper B (CU(B)). The BNC reduces molecular oxygen to 2 water molecules using 4 electrons from cytochrome c in the IMS and 4 protons from the mitochondrial matrix. In Gerbillurus vallinus (Brush-tailed hairy-footed gerbil), this protein is Cytochrome c oxidase subunit 2 (MT-CO2).